The primary structure comprises 131 residues: Translation initiation factor 5A (131 aa).

Position 36 is a hypusine (lysine 36).

It belongs to the eIF-5A family. The N-terminus is blocked.

The protein localises to the cytoplasm. Its function is as follows. Functions by promoting the formation of the first peptide bond. In Sulfolobus acidocaldarius (strain ATCC 33909 / DSM 639 / JCM 8929 / NBRC 15157 / NCIMB 11770), this protein is Translation initiation factor 5A (eif5a).